The chain runs to 340 residues: DNA-directed RNA polymerase subunit alpha (340 aa).

Residues 1-236 (MLSLSKNWNT…EQLQLFISFE (236 aa)) are alpha N-terminal domain (alpha-NTD). Residues 251–340 (FAPYLLKRVD…LSKRYEDSYN (90 aa)) form an alpha C-terminal domain (alpha-CTD) region.

Belongs to the RNA polymerase alpha chain family. In terms of assembly, homodimer. The RNAP catalytic core consists of 2 alpha, 1 beta, 1 beta' and 1 omega subunit. When a sigma factor is associated with the core the holoenzyme is formed, which can initiate transcription.

The enzyme catalyses RNA(n) + a ribonucleoside 5'-triphosphate = RNA(n+1) + diphosphate. Functionally, DNA-dependent RNA polymerase catalyzes the transcription of DNA into RNA using the four ribonucleoside triphosphates as substrates. This is DNA-directed RNA polymerase subunit alpha from Rickettsia peacockii (strain Rustic).